The following is a 71-amino-acid chain: UPF0435 protein BLi00816/BL03111 (71 aa).

The protein belongs to the UPF0435 family.

In Bacillus licheniformis (strain ATCC 14580 / DSM 13 / JCM 2505 / CCUG 7422 / NBRC 12200 / NCIMB 9375 / NCTC 10341 / NRRL NRS-1264 / Gibson 46), this protein is UPF0435 protein BLi00816/BL03111.